The primary structure comprises 159 residues: Transmembrane protein 92 (159 aa).

The signal sequence occupies residues 1 to 26 (MSQAWVPGLAPTLLFSLLAGPQKIAA). Residues 27-57 (KCGLILACPKGFKCCGDSCCQENELFPGPVR) lie on the Extracellular side of the membrane. A helical transmembrane segment spans residues 58 to 78 (IFVIIFLVILSVFCICGLAKC). The Cytoplasmic portion of the chain corresponds to 79–159 (FCRNCREPEP…DQRGIDNPAF (81 aa)). The interval 122–159 (EVILKPSLGPTPTEPPPPYSFRPEEYTGDQRGIDNPAF) is disordered.

Its subcellular location is the membrane. This is Transmembrane protein 92 (TMEM92) from Homo sapiens (Human).